Consider the following 290-residue polypeptide: Thymidylate synthase (290 aa).

DUMP is bound by residues Arg27 and 152–153 (RR). The active-site Nucleophile is the Cys172. DUMP contacts are provided by residues 192-195 (RSAD), Asn203, and 233-235 (HVY). Residue Asp195 participates in (6R)-5,10-methylene-5,6,7,8-tetrahydrofolate binding. Residue Ala289 participates in (6R)-5,10-methylene-5,6,7,8-tetrahydrofolate binding.

It belongs to the thymidylate synthase family. Homodimer.

The catalysed reaction is dUMP + (6R)-5,10-methylene-5,6,7,8-tetrahydrofolate = 7,8-dihydrofolate + dTMP. Its pathway is pyrimidine metabolism; dTTP biosynthesis. The polypeptide is Thymidylate synthase (TS) (Ateles).